A 189-amino-acid polypeptide reads, in one-letter code: Protein GrpE (189 aa).

Residues 1 to 14 (MTDHTPLQPKHEIT) show a composition bias toward basic and acidic residues. The tract at residues 1–23 (MTDHTPLQPKHEITDQADQDTSA) is disordered.

Belongs to the GrpE family. Homodimer.

It is found in the cytoplasm. Participates actively in the response to hyperosmotic and heat shock by preventing the aggregation of stress-denatured proteins, in association with DnaK and GrpE. It is the nucleotide exchange factor for DnaK and may function as a thermosensor. Unfolded proteins bind initially to DnaJ; upon interaction with the DnaJ-bound protein, DnaK hydrolyzes its bound ATP, resulting in the formation of a stable complex. GrpE releases ADP from DnaK; ATP binding to DnaK triggers the release of the substrate protein, thus completing the reaction cycle. Several rounds of ATP-dependent interactions between DnaJ, DnaK and GrpE are required for fully efficient folding. The polypeptide is Protein GrpE (Lawsonia intracellularis (strain PHE/MN1-00)).